The sequence spans 496 residues: NADP-dependent glyceraldehyde-3-phosphate dehydrogenase (496 aa).

Substrate contacts are provided by residues Arg116 and 169–170 (NY). Positions 192, 195, and 230 each coordinate NADP(+). 245–249 (GGDTG) lines the NAD(+) pocket. Glu264 serves as the catalytic Proton acceptor. 297–299 (RCT) provides a ligand contact to substrate. The active-site Nucleophile is Cys298. Glu391 is an NADP(+) binding site. A substrate-binding site is contributed by Arg451.

The protein belongs to the aldehyde dehydrogenase family.

It is found in the cytoplasm. The protein localises to the cytosol. The catalysed reaction is D-glyceraldehyde 3-phosphate + NADP(+) + H2O = (2R)-3-phosphoglycerate + NADPH + 2 H(+). With respect to regulation, competitive inhibition by NADPH, 3-phospho-D-glycerate and ATP. Functionally, important as a means of generating NADPH for biosynthetic reactions. May be a main source of cytosolic NADPH for mannitol biosynthesis in leaves. This is NADP-dependent glyceraldehyde-3-phosphate dehydrogenase from Apium graveolens (Celery).